Consider the following 485-residue polypeptide: Skb1 localization factor 1 (485 aa).

The tract at residues 1–200 (MSSIIQNPIE…VDDSDLTPHT (200 aa)) is sufficient for interaction with Skb1. Disordered regions lie at residues 117–230 (NAAN…MSRN), 286–416 (ETQH…LRRS), and 446–466 (TTQE…KPEK). Polar residues predominate over residues 171 to 182 (SRSSRYSKTSDL). The segment covering 189–198 (RFVDDSDLTP) has biased composition (basic and acidic residues). 2 stretches are compositionally biased toward polar residues: residues 218 to 230 (GRSS…MSRN) and 341 to 363 (VGSS…QQDS). Ser222 bears the Phosphoserine mark. Positions 371–393 (SERSYRRVRDQYLSKPRLSDKNR) are enriched in basic and acidic residues. Polar residues predominate over residues 394 to 416 (YSTFSEFPGQGTPSASQSNLRRS). Residues 447-464 (TQERKPVVKPDSIKTVKP) are compositionally biased toward basic and acidic residues. The required and sufficient for plasma membrane anchoring; lysine-rich, may bind to anionic lipids in the plasma membrane stretch occupies residues 451-485 (KPVVKPDSIKTVKPEKKKSKGFFKKLMHKISHIFD). At Ser458 the chain carries Phosphoserine.

As to quaternary structure, interacts with Skb1.

Its subcellular location is the cell membrane. In terms of biological role, acts as a membrane anchor for Skb1 in forming plasma membrane microdomains. Promotes mitotic entry by sequestering mitotic inhibitor Skb1 from its regulatory targets Cdr1 and Wee1. This chain is Skb1 localization factor 1, found in Schizosaccharomyces pombe (strain 972 / ATCC 24843) (Fission yeast).